The chain runs to 387 residues: Killer cell lectin-like receptor subfamily G member 2 (387 aa).

The disordered stretch occupies residues 1–105 (MEPPQVPAEA…SGEPAPASWA (105 aa)). Residues 15-27 (ASEDSPRPERTGW) show a composition bias toward basic and acidic residues. At Ser143 the chain carries Phosphoserine. Positions 155–174 (QWLPRAPSPGSTWSRGSPLA) are disordered. The helical transmembrane segment at 241–261 (WALVVMAVLLAVCTVAVVALA) threads the bilayer. The 106-residue stretch at 278–383 (SQEQCYYLSE…CSSPRPWVCA (106 aa)) folds into the C-type lectin domain. 2 disulfide bridges follow: Cys299–Cys382 and Cys361–Cys374.

It is found in the membrane. The protein is Killer cell lectin-like receptor subfamily G member 2 (Klrg2) of Mus musculus (Mouse).